The primary structure comprises 177 residues: Large ribosomal subunit protein uL6 (177 aa).

The protein belongs to the universal ribosomal protein uL6 family. In terms of assembly, part of the 50S ribosomal subunit.

Functionally, this protein binds to the 23S rRNA, and is important in its secondary structure. It is located near the subunit interface in the base of the L7/L12 stalk, and near the tRNA binding site of the peptidyltransferase center. This Delftia acidovorans (strain DSM 14801 / SPH-1) protein is Large ribosomal subunit protein uL6.